We begin with the raw amino-acid sequence, 157 residues long: Large ribosomal subunit protein bL34c (157 aa).

The transit peptide at 1-97 (MASLSTSVVA…GQRRRGLVVR (97 aa)) directs the protein to the chloroplast.

This sequence belongs to the bacterial ribosomal protein bL34 family. In terms of assembly, part of the 50S ribosomal subunit.

The protein resides in the plastid. The protein localises to the chloroplast. Its function is as follows. This protein binds directly to 23S ribosomal RNA. This is Large ribosomal subunit protein bL34c (RPL34) from Arabidopsis thaliana (Mouse-ear cress).